Here is a 235-residue protein sequence, read N- to C-terminus: Small ribosomal subunit protein uS3 (235 aa).

Positions 39–107 (VRQFLNKELA…PAQINIAEVK (69 aa)) constitute a KH type-2 domain. The disordered stretch occupies residues 216 to 235 (QPEQQPTDKPKKVPRGKGRK).

Belongs to the universal ribosomal protein uS3 family. In terms of assembly, part of the 30S ribosomal subunit. Forms a tight complex with proteins S10 and S14.

Functionally, binds the lower part of the 30S subunit head. Binds mRNA in the 70S ribosome, positioning it for translation. This chain is Small ribosomal subunit protein uS3, found in Aggregatibacter actinomycetemcomitans (Actinobacillus actinomycetemcomitans).